The following is a 132-amino-acid chain: uncharacterized protein (132 aa).

Positions 1 to 19 are cleaved as a signal peptide; that stretch reads MKKALFLVGLVFTAGVISS. A lipid anchor (N-palmitoyl cysteine) is attached at Cys20. Cys20 is lipidated: S-diacylglycerol cysteine.

The protein localises to the cell membrane. This is an uncharacterized protein from Aquifex aeolicus (strain VF5).